Here is a 1366-residue protein sequence, read N- to C-terminus: DNA-directed RNA polymerase subunit beta'' (1366 aa).

4 residues coordinate Zn(2+): C220, C291, C298, and C301.

It belongs to the RNA polymerase beta' chain family. RpoC2 subfamily. In terms of assembly, in plastids the minimal PEP RNA polymerase catalytic core is composed of four subunits: alpha, beta, beta', and beta''. When a (nuclear-encoded) sigma factor is associated with the core the holoenzyme is formed, which can initiate transcription. Requires Zn(2+) as cofactor.

The protein resides in the plastid. The protein localises to the chloroplast. It catalyses the reaction RNA(n) + a ribonucleoside 5'-triphosphate = RNA(n+1) + diphosphate. In terms of biological role, DNA-dependent RNA polymerase catalyzes the transcription of DNA into RNA using the four ribonucleoside triphosphates as substrates. The chain is DNA-directed RNA polymerase subunit beta'' from Phaseolus vulgaris (Kidney bean).